Reading from the N-terminus, the 236-residue chain is MHRLISRLRAFFQRKADPKEAKEERQKLLEDATSLQNKQGVVAGSCSNYDCMTKHTRSSADVETGDNPLKAEPNLPAAVEEQSPRGLNAVTVDNDHDEEPSESHMRILLASITSLVGDADYNGHGFSFSLDIACKDFKPYNGDLVEIEFSDEQDTQSRRAILVKPLKHCHLNEVRVTRTDGSTGVLEDTIFFTLDSLKLPSGYVPQPDDVVNVVAVQSMQSNYFWRAVAMTPVQVL.

The interval 57 to 84 (RSSADVETGDNPLKAEPNLPAAVEEQSP) is disordered.

In terms of assembly, interacts with GABARAP; this interaction may be important for GABARAP protein stability. Interacts with LAMP2; this interaction may be important for LAMP2 protein stability. Expressed in spermatozoa (at protein level).

The protein resides in the cytoplasm. It is found in the cytoplasmic vesicle. It localises to the secretory vesicle. The protein localises to the acrosome. Its subcellular location is the cell projection. The protein resides in the cilium. It is found in the flagellum. Plays a role in spermatogenesis, possibly acting in the regulation of the autophagy pathway. The sequence is that of Cancer/testis antigen 55 (Ct55) from Mus musculus (Mouse).